Consider the following 512-residue polypeptide: 2,3-bisphosphoglycerate-independent phosphoglycerate mutase (512 aa).

Residues Asp11 and Ser61 each coordinate Mn(2+). The active-site Phosphoserine intermediate is Ser61. Residues His122, 152–153 (RD), Arg184, Arg190, 259–262 (RADR), and Lys332 each bind substrate. Mn(2+)-binding residues include Asp399, His403, Asp440, His441, and His459.

This sequence belongs to the BPG-independent phosphoglycerate mutase family. Monomer. It depends on Mn(2+) as a cofactor.

The catalysed reaction is (2R)-2-phosphoglycerate = (2R)-3-phosphoglycerate. It functions in the pathway carbohydrate degradation; glycolysis; pyruvate from D-glyceraldehyde 3-phosphate: step 3/5. Catalyzes the interconversion of 2-phosphoglycerate and 3-phosphoglycerate. In Francisella tularensis subsp. tularensis (strain FSC 198), this protein is 2,3-bisphosphoglycerate-independent phosphoglycerate mutase.